The following is a 91-amino-acid chain: Apolipoprotein C-III (91 aa).

An N-terminal signal peptide occupies residues 1-20 (MQPRVLLAVTLLALLVSARA). The residue at position 63 (Met63) is a Methionine sulfoxide. The segment at 68-91 (DSMKGYWTSLIGRLSGFLDSTPSS) is lipid-binding.

This sequence belongs to the apolipoprotein C3 family.

It localises to the secreted. Its function is as follows. Component of triglyceride-rich very low density lipoproteins (VLDL) and high density lipoproteins (HDL) in plasma. Plays a multifaceted role in triglyceride homeostasis. Intracellularly, promotes hepatic very low density lipoprotein 1 (VLDL1) assembly and secretion; extracellularly, attenuates hydrolysis and clearance of triglyceride-rich lipoproteins (TRLs). Impairs the lipolysis of TRLs by inhibiting lipoprotein lipase and the hepatic uptake of TRLs by remnant receptors. Formed of several curved helices connected via semiflexible hinges, so that it can wrap tightly around the curved micelle surface and easily adapt to the different diameters of its natural binding partners. This Cavia porcellus (Guinea pig) protein is Apolipoprotein C-III (APOC3).